The chain runs to 1100 residues: Lysylphosphatidylglycerol biosynthesis bifunctional protein LysX (1100 aa).

The tract at residues 1–601 is phosphatidylglycerol lysyltransferase; the sequence is MTPTSLARAR…LLHSDGTAPD (601 aa). 7 consecutive transmembrane segments (helical) span residues 18–38, 60–80, 84–104, 112–132, 154–174, 206–226, and 314–332; these read VPAA…LASV, FPDT…ALAA, IAWW…IAGL, FAEV…AFLL, LVAS…LFPG, VFVN…TAIV, and AYGW…AQAF. Positions 602–1100 are lysine--tRNA ligase; sequence GMGLQADLAD…TLPFPLAKPR (499 aa). The OB DNA-binding region spans 661–739; that stretch reads VAVAGRVLRS…SLLVSGWRLI (79 aa). Residues Asp-1012 and Glu-1019 each contribute to the Mg(2+) site.

The protein in the N-terminal section; belongs to the LPG synthetase family. This sequence in the C-terminal section; belongs to the class-II aminoacyl-tRNA synthetase family. Requires Mg(2+) as cofactor.

It is found in the cell membrane. The enzyme catalyses tRNA(Lys) + L-lysine + ATP = L-lysyl-tRNA(Lys) + AMP + diphosphate. It carries out the reaction L-lysyl-tRNA(Lys) + a 1,2-diacyl-sn-glycero-3-phospho-(1'-sn-glycerol) = a 1,2-diacyl-sn-glycero-3-phospho-1'-(3'-O-L-lysyl)-sn-glycerol + tRNA(Lys). Its function is as follows. Catalyzes the production of L-lysyl-tRNA(Lys)transfer and the transfer of a lysyl group from L-lysyl-tRNA(Lys) to membrane-bound phosphatidylglycerol (PG), which produces lysylphosphatidylglycerol (LPG), one of the components of the bacterial membrane with a positive net charge. LPG synthesis contributes to the resistance to cationic antimicrobial peptides (CAMPs) and likely protects M.tuberculosis against the CAMPs produced by competiting microorganisms (bacteriocins). In fact, the modification of anionic phosphatidylglycerol with positively charged L-lysine results in repulsion of the peptides. The sequence is that of Lysylphosphatidylglycerol biosynthesis bifunctional protein LysX (lysX) from Mycolicibacterium vanbaalenii (strain DSM 7251 / JCM 13017 / BCRC 16820 / KCTC 9966 / NRRL B-24157 / PYR-1) (Mycobacterium vanbaalenii).